The sequence spans 237 residues: RNA chaperone ProQ (237 aa).

A disordered region spans residues 106-188; sequence AKARVQAQRA…QPRPVPVTDI (83 aa). Basic and acidic residues predominate over residues 146-158; that stretch reads PRREAGAAPENRK.

Belongs to the ProQ family.

It localises to the cytoplasm. Its function is as follows. RNA chaperone with significant RNA binding, RNA strand exchange and RNA duplexing activities. May regulate ProP activity through an RNA-based, post-transcriptional mechanism. This is RNA chaperone ProQ from Yersinia pseudotuberculosis serotype O:1b (strain IP 31758).